The primary structure comprises 273 residues: MAVCNCFLQAPPLSRILLPVLSRRATTLSAGYGRLKSTVTFCSTVNRTSPLTSSVRAEVKRVSRKDDKVASATDVQFETPLKIVEYPDPILRAKNKRIDIFDENLKNLVDAMFDVMYKTDGIGLSAPQVGLNVQLMVFNPAGEPGEGKEIVLVNPKIKKYSDKLVPFDEGCLSFPGIYAEVVRPQSVKIDARDITGERFSISLSRLPARIFQHEYDHLEGVLFFDRMTDQVLDSIREELEALEKKYEEKTGLPSPERVEARQKRKAGVGFGKR.

A chloroplast and mitochondrion-targeting transit peptide spans 1 to 56 (MAVCNCFLQAPPLSRILLPVLSRRATTLSAGYGRLKSTVTFCSTVNRTSPLTSSVR). Fe cation contacts are provided by Cys171 and His213. Glu214 is an active-site residue. Residue His217 participates in Fe cation binding. A compositionally biased stretch (basic and acidic residues) spans 246–261 (YEEKTGLPSPERVEAR). The tract at residues 246–273 (YEEKTGLPSPERVEARQKRKAGVGFGKR) is disordered. Positions 262–273 (QKRKAGVGFGKR) are enriched in basic residues.

The protein belongs to the polypeptide deformylase family. Homodimer. Requires Fe(2+) as cofactor. As to expression, expressed in leaves and flowers.

It is found in the plastid. It localises to the chloroplast stroma. The protein localises to the mitochondrion. It carries out the reaction N-terminal N-formyl-L-methionyl-[peptide] + H2O = N-terminal L-methionyl-[peptide] + formate. Its activity is regulated as follows. Inhibited by actinonin. Functionally, removes the formyl group from the N-terminal Met of newly synthesized proteins. Has a preferred substrate specificity towards the photosystem II (PS II) D1 polypeptide. The polypeptide is Peptide deformylase 1B, chloroplastic/mitochondrial (PDF1B) (Arabidopsis thaliana (Mouse-ear cress)).